The following is a 178-amino-acid chain: DNA-directed RNA polymerase V subunit 7 (178 aa).

This sequence belongs to the eukaryotic RPB7/RPC8 RNA polymerase subunit family. In terms of assembly, component of the RNA polymerase V complex.

The protein localises to the nucleus. Functionally, DNA-dependent RNA polymerase catalyzes the transcription of DNA into RNA using the four ribonucleoside triphosphates as substrates. Component of RNA polymerase V involved in RNA-directed DNA methylation-dependent (RdDM) silencing of endogenous repeated sequences, including transposable elements. In Arabidopsis thaliana (Mouse-ear cress), this protein is DNA-directed RNA polymerase V subunit 7 (NRPE7).